The primary structure comprises 274 residues: Putative hydro-lyase SAV_6940 (274 aa).

The protein belongs to the D-glutamate cyclase family.

The protein is Putative hydro-lyase SAV_6940 of Streptomyces avermitilis (strain ATCC 31267 / DSM 46492 / JCM 5070 / NBRC 14893 / NCIMB 12804 / NRRL 8165 / MA-4680).